We begin with the raw amino-acid sequence, 299 residues long: Formin-like protein 12 (299 aa).

Residues 1 to 295 (MASNCEKMLS…LEKRKMNIKQ (295 aa)) form the FH2 domain.

It belongs to the formin-like family. Class-II subfamily.

The chain is Formin-like protein 12 (FH12) from Arabidopsis thaliana (Mouse-ear cress).